A 523-amino-acid chain; its full sequence is Thiamine pathway transporter THI73 (523 aa).

Residues 1–79 lie on the Cytoplasmic side of the membrane; that stretch reads MKNMSQRSMD…LSPKVLRKVD (79 aa). Residues 80-100 traverse the membrane as a helical segment; it reads LFILPFLCCTYLLMFLDKALL. Residues 101–118 lie on the Extracellular side of the membrane; it reads NYAASMGIKDHLKGNEFS. The chain crosses the membrane as a helical span at residues 119–139; it reads NLGTIFSAAYIFMEPVVTYLI. Over 140–141 the chain is Cytoplasmic; that stretch reads QK. The helical transmembrane segment at 142–162 threads the bilayer; the sequence is FPISKILGTFITVWGIVLACH. Residues 163–176 lie on the Extracellular side of the membrane; sequence AACKTYASLMVVRT. The helical transmembrane segment at 177–197 threads the bilayer; sequence LLGLFESSSAVGCIAISGMYY. Residues 198–207 lie on the Cytoplasmic side of the membrane; the sequence is TKSEQSARIG. A helical transmembrane segment spans residues 208–228; sequence FWATQAGTGYIVGGLISFGFL. The Extracellular portion of the chain corresponds to 229–239; it reads HYHGTAFTSWQ. Residues 240–260 form a helical membrane-spanning segment; it reads IMFLVVGLVTVAFGVLTFLYL. Residues 261-312 lie on the Cytoplasmic side of the membrane; sequence PDNVTNAWFLNKEEKIQVVEHIRANQTGLETKKFKKQQVKELFLHDKFTWPM. The chain crosses the membrane as a helical span at residues 313–333; sequence LLLTACSQISTGAIGTFSVTI. Residues 334–345 are Extracellular-facing; it reads TGTFGFDKYETA. The helical transmembrane segment at 346 to 366 threads the bilayer; the sequence is LLQLPIGAITAMIILITTQML. Residues 367–371 are Cytoplasmic-facing; sequence SRWGH. Residues 372 to 392 traverse the membrane as a helical segment; the sequence is ITLITTSMYIPAIIGCIVLIS. The Extracellular segment spans residues 393–400; that stretch reads LPLSHKIG. Residues 401–421 form a helical membrane-spanning segment; that stretch reads NLFSLYLLYSGSCVITNIYIW. Topologically, residues 422-432 are cytoplasmic; the sequence is NSCNTSGYTKR. Residues 433–452 traverse the membrane as a helical segment; sequence VFRNAITMIVYNVSCIIAPQ. The Extracellular portion of the chain corresponds to 453–466; that stretch reads MFRAYSAPRYIPAK. A helical membrane pass occupies residues 467–487; the sequence is IALLVTQCVCVPLQLYIGYIC. The Cytoplasmic segment spans residues 488-523; the sequence is KKENEKRDKEQEGQERKKYQFLDLTDIENRNFRYIY.

It belongs to the major facilitator superfamily. Allantoate permease family.

It localises to the endoplasmic reticulum membrane. Its subcellular location is the cell membrane. Its function is as follows. Transports either thiamine or, rather, a related metabolite involved in the thiamine biosynthesis pathway. The chain is Thiamine pathway transporter THI73 (THI73) from Saccharomyces cerevisiae (strain ATCC 204508 / S288c) (Baker's yeast).